A 316-amino-acid polypeptide reads, in one-letter code: Ribosomal RNA large subunit methyltransferase F (316 aa).

The protein belongs to the methyltransferase superfamily. METTL16/RlmF family.

It localises to the cytoplasm. It carries out the reaction adenosine(1618) in 23S rRNA + S-adenosyl-L-methionine = N(6)-methyladenosine(1618) in 23S rRNA + S-adenosyl-L-homocysteine + H(+). Specifically methylates the adenine in position 1618 of 23S rRNA. This Pseudomonas entomophila (strain L48) protein is Ribosomal RNA large subunit methyltransferase F.